A 215-amino-acid chain; its full sequence is RNA pyrophosphohydrolase (215 aa).

Residues 6 to 149 enclose the Nudix hydrolase domain; it reads GFRPNVGIIL…KRDVYQLALT (144 aa). The Nudix box motif lies at 38-59; that stretch reads GGIKYGETPMQAMYRELHEETG.

The protein belongs to the Nudix hydrolase family. RppH subfamily. A divalent metal cation is required as a cofactor.

In terms of biological role, accelerates the degradation of transcripts by removing pyrophosphate from the 5'-end of triphosphorylated RNA, leading to a more labile monophosphorylated state that can stimulate subsequent ribonuclease cleavage. This is RNA pyrophosphohydrolase from Burkholderia vietnamiensis (strain G4 / LMG 22486) (Burkholderia cepacia (strain R1808)).